A 1267-amino-acid polypeptide reads, in one-letter code: Probable cation-transporting ATPase catp-6 (1267 aa).

At 1–32 (MVEAGGARRHRMTLESGDHTLTLFAYRTGPFR) the chain is on the extracellular side. The helical transmembrane segment at 33–53 (TILFYALTVLTLGIFRLILHW) threads the bilayer. Residues 54–189 (KQKWDVKMRM…RNEIVVQLRP (136 aa)) are Cytoplasmic-facing. Residues 190–210 (ILYLLVMEVITPFYVFQIFSV) traverse the membrane as a helical segment. The Extracellular segment spans residues 211–217 (TVWYNDE). The chain crosses the membrane as a helical span at residues 218–238 (YAYYASLIVILSLGSIVMDVY). The Cytoplasmic portion of the chain corresponds to 239 to 390 (QIRTQEIRLR…DFRFTKDLFK (152 aa)). The chain crosses the membrane as a helical span at residues 391 to 411 (FILFLACISGCGFIYTIIVMI). Over 412–424 (MRGNTLRRIIVRS) the chain is Extracellular. A helical membrane pass occupies residues 425–445 (LDIITITVPPALPAAMSVGII). The Cytoplasmic portion of the chain corresponds to 446–950 (NAQLRLKKKE…VTSFGIFKYM (505 aa)). Asp476 serves as the catalytic 4-aspartylphosphate intermediate. Asp891 and Asp895 together coordinate Mg(2+). Residues 951 to 971 (AGYSLTQFVTVMHLYWISNIL) form a helical membrane-spanning segment. Residues 972–976 (TDGQF) are Extracellular-facing. The helical transmembrane segment at 977 to 997 (MYIDMFLITMFALLFGNTPAF) threads the bilayer. Over 998-1013 (YRLAHTPPPTRLLSIA) the chain is Cytoplasmic. Residues 1014–1034 (SMTSVVGQLIIIGVVQFIVFF) form a helical membrane-spanning segment. Residues 1035–1058 (STSQQPWFTPYQPPVDDEVEDKRS) lie on the Extracellular side of the membrane. Residues 1059–1079 (MQGTALFCVSMFQYIILALVY) traverse the membrane as a helical segment. Over 1080–1097 (SKGPPFRGNLWSNKPMCA) the chain is Cytoplasmic. The chain crosses the membrane as a helical span at residues 1098 to 1118 (LTIFATLLCLFIVIWPTELVL). Residues 1119–1132 (KTLGNVELPSLTFR) lie on the Extracellular side of the membrane. Residues 1133–1153 (IFIVIVGAVNAAVSYGFETLF) form a helical membrane-spanning segment. The Cytoplasmic portion of the chain corresponds to 1154 to 1267 (VDFFLLGYWE…EEPEKLERTY (114 aa)). The interval 1232–1256 (ERLISRIGGEPTWLTNPIPPHSLSE) is disordered.

Belongs to the cation transport ATPase (P-type) (TC 3.A.3) family. Type V subfamily.

It localises to the membrane. The enzyme catalyses ATP + H2O = ADP + phosphate + H(+). The polypeptide is Probable cation-transporting ATPase catp-6 (Caenorhabditis elegans).